The chain runs to 450 residues: MKNSLSLDLTKTKPYVEEHELQYLESIIREMDNTLGKKTGSGNKFLGWMDLPINYNKEEFARIKKAAEKIKNTCDVFIVIGIGGSYLGSRAAIEMISNTFYNNLDKNQRKVPQIYFAGNNISSTYMADLLELVKDKDICVNVISKSGTTTEPAIAFRIFKELLENKYGKEGAKERIFATTDAAKGALRTLADSEGYETFVIPDDVGGRFSVLTPVGLLPIAASGIDIDEMMKGAADAREEYSSDNIEKNHVYRYVAVRNALYRKGKTTEMLVNFEPCLHYFGEWWKQLYGESEGKDGKGIFPAAADFSTDLHSMGQYIQEGLRNIFETFINVENPRKSIIVKEDKENLDGLNFLADKDMDYVNHQALRGTVLAHNDGGVPAMVLNVPELSAYYFGQLVYFFEKACGISGYLLGVNPFDQPGVEAYKKNMFALLGKPGYENMKATLEERLK.

The Proton donor role is filled by Glu291. Active-site residues include His312 and Lys426.

It belongs to the GPI family.

It is found in the cytoplasm. The enzyme catalyses alpha-D-glucose 6-phosphate = beta-D-fructose 6-phosphate. It functions in the pathway carbohydrate biosynthesis; gluconeogenesis. Its pathway is carbohydrate degradation; glycolysis; D-glyceraldehyde 3-phosphate and glycerone phosphate from D-glucose: step 2/4. Catalyzes the reversible isomerization of glucose-6-phosphate to fructose-6-phosphate. This is Glucose-6-phosphate isomerase from Clostridium botulinum (strain Hall / ATCC 3502 / NCTC 13319 / Type A).